The chain runs to 317 residues: Melanocyte-stimulating hormone receptor (317 aa).

Topologically, residues 1–37 (MPMQEPQRRLLGPFNSTRTGAPHLELSANQTGPWCLH) are extracellular. Residues asparagine 15 and asparagine 29 are each glycosylated (N-linked (GlcNAc...) asparagine). The helical transmembrane segment at 38 to 63 (VSIPDGLFLSLGLVSLVENVLVVISI) threads the bilayer. At 64–72 (AKNQNLHSP) the chain is on the cytoplasmic side. Residues 73 to 93 (MYYFICCLALSDLLVSVSIVL) traverse the membrane as a helical segment. Over 94 to 118 (ETTLILVLEAGALATRVTVVQQLDN) the chain is Extracellular. The helical transmembrane segment at 119–140 (VIDVLICASMVSSLCFLGAIAV) threads the bilayer. The Cytoplasmic segment spans residues 141–163 (DRYISIFYALRYHSIVTLPRARW). Residues 164-183 (AIVAIWVASISSSTLFVAYY) form a helical membrane-spanning segment. Over 184-191 (NHTAVLLC) the chain is Extracellular. Residues 192–211 (LVTFFLATLALMVVLYVHML) form a helical membrane-spanning segment. At 212 to 240 (ARAHQHAQAIAQLHKRQHLVHQGFRLKGA) the chain is on the cytoplasmic side. The helical transmembrane segment at 241-266 (ATLTILLGIFFLCWGPFFLYLTLIVL) threads the bilayer. Over 267 to 279 (CPKHPTCGCFFKN) the chain is Extracellular. A helical transmembrane segment spans residues 280–300 (LNLFLALIIFNSIVDPLIYAF). Residues 301-317 (RSQELRMTLKEVLLCSW) are Cytoplasmic-facing. Cysteine 315 carries the S-palmitoyl cysteine lipid modification.

The protein belongs to the G-protein coupled receptor 1 family. Interacts with MGRN1, but does not undergo MGRN1-mediated ubiquitination; this interaction competes with GNAS-binding and thus inhibits agonist-induced cAMP production. Interacts with OPN3; the interaction results in a decrease in MC1R-mediated cAMP signaling and ultimately a decrease in melanin production in melanocytes.

The protein localises to the cell membrane. In terms of biological role, receptor for MSH (alpha, beta and gamma) and ACTH. The activity of this receptor is mediated by G proteins which activate adenylate cyclase. Mediates melanogenesis, the production of eumelanin (black/brown) and phaeomelanin (red/yellow), via regulation of cAMP signaling in melanocytes. The sequence is that of Melanocyte-stimulating hormone receptor (MC1R) from Chaetodipus penicillatus (Desert pocket mouse).